An 88-amino-acid chain; its full sequence is Serine protease inhibitor Kazal-type 11 (88 aa).

The N-terminal stretch at 1-24 (MSSTWIKFLFILTLVLLPYFVAES) is a signal peptide. Residues 32–87 (LRKVPNCTLYKSESDCSRTLIPVCADNQMTYYNACYFCLEQLVSPIKYKYHGICTK) form the Kazal-like domain. Residue N37 is glycosylated (N-linked (GlcNAc...) asparagine). 3 cysteine pairs are disulfide-bonded: C38–C69, C47–C66, and C55–C85.

As to expression, expressed in epydiymis, in the caput. Also expressed in seminal vesicles.

It is found in the secreted. Functionally, probable serine protease inhibitor. In Mus musculus (Mouse), this protein is Serine protease inhibitor Kazal-type 11 (Spink11).